The following is a 244-amino-acid chain: ATP synthase subunit a (244 aa).

Helical transmembrane passes span 20–40 (FFDVSITTITVYLGLLMVIVI), 81–101 (GILFFPFIMSLFLFVLTLNVM), 113–133 (QLLVTFTLAITIMIGITIWGF), 140–160 (FLNIFVPSGIEPWLLPLLVFI), 176–196 (LFANMLAGHLLIHIIGVAAIY), 202–222 (FIGILPWICVIAFMFLELGIA), and 223–243 (FLQAYVFVLLTLIYIANIINL).

Belongs to the ATPase A chain family. In terms of assembly, F-type ATPases have 2 components, CF(1) - the catalytic core - and CF(0) - the membrane proton channel. CF(1) has five subunits: alpha(3), beta(3), gamma(1), delta(1), epsilon(1). CF(0) has three main subunits: a, b and c.

The protein localises to the mitochondrion inner membrane. Mitochondrial membrane ATP synthase (F(1)F(0) ATP synthase or Complex V) produces ATP from ADP in the presence of a proton gradient across the membrane which is generated by electron transport complexes of the respiratory chain. F-type ATPases consist of two structural domains, F(1) - containing the extramembraneous catalytic core and F(0) - containing the membrane proton channel, linked together by a central stalk and a peripheral stalk. During catalysis, ATP synthesis in the catalytic domain of F(1) is coupled via a rotary mechanism of the central stalk subunits to proton translocation. Key component of the proton channel; it may play a direct role in the translocation of protons across the membrane. The polypeptide is ATP synthase subunit a (atp6) (Dictyostelium citrinum (Slime mold)).